The sequence spans 24 residues: Xenoposin-precursor fragment B1 (24 aa).

Expressed by the skin glands.

The protein resides in the secreted. Its function is as follows. Has antibacterial activity. In Xenopus borealis (Kenyan clawed frog), this protein is Xenoposin-precursor fragment B1.